A 203-amino-acid chain; its full sequence is Glycerol-3-phosphate acyltransferase (203 aa).

A run of 4 helical transmembrane segments spans residues 7–27, 82–102, 118–138, and 141–161; these read TLLM…VLVC, AVSL…PVFF, APIG…LLLI, and YSSL…WWLD.

It belongs to the PlsY family. As to quaternary structure, probably interacts with PlsX.

The protein localises to the cell inner membrane. It carries out the reaction an acyl phosphate + sn-glycerol 3-phosphate = a 1-acyl-sn-glycero-3-phosphate + phosphate. Its pathway is lipid metabolism; phospholipid metabolism. Catalyzes the transfer of an acyl group from acyl-phosphate (acyl-PO(4)) to glycerol-3-phosphate (G3P) to form lysophosphatidic acid (LPA). This enzyme utilizes acyl-phosphate as fatty acyl donor, but not acyl-CoA or acyl-ACP. This chain is Glycerol-3-phosphate acyltransferase, found in Shewanella baltica (strain OS223).